The sequence spans 265 residues: tRNA pseudouridine synthase A (265 aa).

D58 acts as the Nucleophile in catalysis. Y116 provides a ligand contact to substrate.

It belongs to the tRNA pseudouridine synthase TruA family. Homodimer.

It catalyses the reaction uridine(38/39/40) in tRNA = pseudouridine(38/39/40) in tRNA. In terms of biological role, formation of pseudouridine at positions 38, 39 and 40 in the anticodon stem and loop of transfer RNAs. The polypeptide is tRNA pseudouridine synthase A (Neisseria gonorrhoeae (strain NCCP11945)).